We begin with the raw amino-acid sequence, 238 residues long: ATP synthase subunit a, chloroplastic (238 aa).

The next 5 membrane-spanning stretches (helical) occupy residues 27–47 (GQVLITSWVVLGILAVLSFLG), 86–106 (VPFLGTIFLFIFVSNWSGALL), 125–145 (INTTVALALLTSISYFYAGIS), 190–210 (LVVGVLVALVPLIIPIPIMLL), and 211–231 (GVFTSAIQALVFATLAGAYIN).

This sequence belongs to the ATPase A chain family. As to quaternary structure, F-type ATPases have 2 components, F(1) - the catalytic core - and F(0) - the membrane proton channel. F(1) has five subunits: alpha(3), beta(3), gamma(1), delta(1), epsilon(1). F(0) has four main subunits: a(1), b(1), b'(1) and c(10-14). The alpha and beta chains form an alternating ring which encloses part of the gamma chain. F(1) is attached to F(0) by a central stalk formed by the gamma and epsilon chains, while a peripheral stalk is formed by the delta, b and b' chains.

Its subcellular location is the plastid. The protein resides in the chloroplast thylakoid membrane. F(1)F(0) ATP synthase produces ATP from ADP in the presence of a proton or sodium gradient. F-type ATPases consist of two structural domains, F(1) containing the extramembraneous catalytic core and F(0) containing the membrane proton channel, linked together by a central stalk and a peripheral stalk. During catalysis, ATP synthesis in the catalytic domain of F(1) is coupled via a rotary mechanism of the central stalk subunits to proton translocation. This chain is ATP synthase subunit a, chloroplastic, found in Chlamydomonas reinhardtii (Chlamydomonas smithii).